Consider the following 335-residue polypeptide: Pyridoxal 5'-phosphate synthase subunit PdxS (335 aa).

D-ribose 5-phosphate is bound at residue D59. K116 serves as the catalytic Schiff-base intermediate with D-ribose 5-phosphate. G188 provides a ligand contact to D-ribose 5-phosphate. K200 serves as a coordination point for D-glyceraldehyde 3-phosphate. D-ribose 5-phosphate-binding positions include G253 and 274 to 275 (GS).

This sequence belongs to the PdxS/SNZ family. As to quaternary structure, in the presence of PdxT, forms a dodecamer of heterodimers.

The enzyme catalyses aldehydo-D-ribose 5-phosphate + D-glyceraldehyde 3-phosphate + L-glutamine = pyridoxal 5'-phosphate + L-glutamate + phosphate + 3 H2O + H(+). It functions in the pathway cofactor biosynthesis; pyridoxal 5'-phosphate biosynthesis. Catalyzes the formation of pyridoxal 5'-phosphate from ribose 5-phosphate (RBP), glyceraldehyde 3-phosphate (G3P) and ammonia. The ammonia is provided by the PdxT subunit. Can also use ribulose 5-phosphate and dihydroxyacetone phosphate as substrates, resulting from enzyme-catalyzed isomerization of RBP and G3P, respectively. The sequence is that of Pyridoxal 5'-phosphate synthase subunit PdxS from Hyperthermus butylicus (strain DSM 5456 / JCM 9403 / PLM1-5).